The primary structure comprises 617 residues: Chaperone protein DnaK (617 aa).

A Phosphothreonine; by autocatalysis modification is found at Thr-175. Residues 578–592 (AGAEAQQGAQGTQGA) are compositionally biased toward low complexity. Residues 578 to 617 (AGAEAQQGAQGTQGADMGGNAQGKDDDNVVDADFKVEDDK) form a disordered region. Residues 600–617 (GKDDDNVVDADFKVEDDK) are compositionally biased toward basic and acidic residues.

This sequence belongs to the heat shock protein 70 family.

In terms of biological role, acts as a chaperone. The polypeptide is Chaperone protein DnaK (Clostridium novyi (strain NT)).